Reading from the N-terminus, the 614-residue chain is Vitamin B12 transporter BtuB (614 aa).

An N-terminal signal peptide occupies residues 1-20; it reads MIKKASLLTACSVTAFSAWA. Positions 26–33 match the TonB box motif; the sequence is DTLVVTAN. The 115-residue stretch at 38–152 folds into the TBDR plug domain; the sequence is PRSTVLAPTT…IGGVVNIITT (115 aa). Cyanocob(III)alamin is bound by residues leucine 83, serine 85, asparagine 92, and 110-111; that span reads VS. One can recognise a TBDR beta-barrel domain in the interval 155–614; the sequence is HPGTEISAGW…EYTLXGSYTF (460 aa). The next 3 beta stranded transmembrane spans lie at 158–165, 169–178, and 184–195; these read TEISAGWG, YQNYDVSTQQ, and TRVTLLGDYAHT. Ca(2+) is bound by residues aspartate 199, glutamine 211, aspartate 213, and aspartate 215. A run of 2 beta stranded transmembrane segments spans residues 217-227 and 232-248; these read FLSKTLYGALE and DAWSGFVRGYGYDNRTN. Tyrosine 249 and aspartate 250 together coordinate Ca(2+). Residue alanine 251 coordinates cyanocob(III)alamin. Residue aspartate 261 participates in Ca(2+) binding. 14 beta stranded membrane-spanning segments follow: residues 263-277, 279-296, 309-325, 328-337, 353-369, 371-381, 385-400, 403-417, 434-443, 449-458, 473-490, 494-509, 517-529, and 535-550; these read RKLYSQSWDAGLRYN, ELIKSQLITSYSHSKDYN, TLDEMKQYTVQWANNII, HGNIGAGVDW, YDQRNTGIYLTGLQQVG, FTFEGAGRSDD, FGRHGTWQTSAGWEFI, YRFIASYGTSYKAPN, KSKQWEGAFE, VNWRISGYRN, YYNEGKARIKGVEATANF, PLTHTVSYDYVDARNA, RRAKQQVKYQLDW, and DWGITYQYLGTRYDKD. Position 309 (threonine 309) interacts with cyanocob(III)alamin. A cyanocob(III)alamin-binding site is contributed by arginine 517. Cyanocob(III)alamin is bound at residue tyrosine 551. 3 consecutive transmembrane segments (beta stranded) span residues 558–572, 585–596, and 602–614; these read TVKMGGVSLWDLAVA, IANLFDKDYETV, and AGREYTLXGSYTF. The TonB C-terminal box motif lies at 597–614; the sequence is YGYQTAGREYTLXGSYTF.

The protein belongs to the TonB-dependent receptor family. BtuB (TC 1.B.14.3.1) subfamily.

The protein resides in the cell outer membrane. Functionally, involved in the active translocation of vitamin B12 (cyanocobalamin) across the outer membrane to the periplasmic space. It derives its energy for transport by interacting with the trans-periplasmic membrane protein TonB. The polypeptide is Vitamin B12 transporter BtuB (Escherichia coli O6:H1 (strain CFT073 / ATCC 700928 / UPEC)).